Reading from the N-terminus, the 353-residue chain is Fasciculation and elongation protein zeta-2 (353 aa).

Positions 19–49 are disordered; the sequence is SLLDQENCNASPEPGAEAGAEAGGGADGFPA. Low complexity predominate over residues 28–38; it reads ASPEPGAEAGA. A phosphoserine mark is found at Ser135, Ser176, and Ser195. Residues 214-286 are a coiled coil; sequence KRLSVSELNE…AKKKKKLKNG (73 aa). The interval 271–300 is disordered; it reads KEHKETAKKKKKLKNGSSQNGKNERSHMPG.

The protein belongs to the zygin family. In terms of assembly, homodimer; disulfide-linked. May form heterodimers with FEZ1. Interacts with synaptotagmin. As to expression, expressed in nonneural tissues, such as heart, lung, spleen, muscle, testis, placenta and melanocytes.

Involved in axonal outgrowth and fasciculation. This Homo sapiens (Human) protein is Fasciculation and elongation protein zeta-2 (FEZ2).